A 379-amino-acid chain; its full sequence is Proton extrusion protein PxcA (379 aa).

A run of 4 helical transmembrane segments spans residues 153–173 (TLVS…LQQI), 254–274 (AIKN…VCLF), 300–320 (FVII…GWTV), and 337–357 (FIDL…KYWI).

Belongs to the CemA family.

It localises to the cell inner membrane. Its function is as follows. Required for H(+) efflux immediately after light irradiation to form a rapid H(+) concentration gradient across the thylakoid membranes. Together with PxcL, contributes to transient H(+) uptake following dark to light transition. This is Proton extrusion protein PxcA from Synechococcus sp. (strain RCC307).